We begin with the raw amino-acid sequence, 140 residues long: MLMPKRVKHRKQMKGRMKGDAQRGASLAFGEFGLQATECGWVDSRQIEAARIAMTRYIKRGGKIWIRLFPDKPLTSKPAETRMGKGKGSPDSWVCVVKPGKVLYEMEGVTEEIAREAFRLAAHKLPVGTKFISRKDGHES.

The segment covering 1 to 16 has biased composition (basic residues); it reads MLMPKRVKHRKQMKGR. A disordered region spans residues 1–20; the sequence is MLMPKRVKHRKQMKGRMKGD.

It belongs to the universal ribosomal protein uL16 family. Part of the 50S ribosomal subunit.

Functionally, binds 23S rRNA and is also seen to make contacts with the A and possibly P site tRNAs. This chain is Large ribosomal subunit protein uL16, found in Geobacter sulfurreducens (strain ATCC 51573 / DSM 12127 / PCA).